A 325-amino-acid polypeptide reads, in one-letter code: Phosphate acyltransferase (325 aa).

Belongs to the PlsX family. In terms of assembly, homodimer. Probably interacts with PlsY.

The protein localises to the cytoplasm. It carries out the reaction a fatty acyl-[ACP] + phosphate = an acyl phosphate + holo-[ACP]. Its pathway is lipid metabolism; phospholipid metabolism. Catalyzes the reversible formation of acyl-phosphate (acyl-PO(4)) from acyl-[acyl-carrier-protein] (acyl-ACP). This enzyme utilizes acyl-ACP as fatty acyl donor, but not acyl-CoA. The polypeptide is Phosphate acyltransferase (Staphylococcus epidermidis (strain ATCC 35984 / DSM 28319 / BCRC 17069 / CCUG 31568 / BM 3577 / RP62A)).